Here is a 387-residue protein sequence, read N- to C-terminus: Exodeoxyribonuclease 7 large subunit (387 aa).

It belongs to the XseA family. As to quaternary structure, heterooligomer composed of large and small subunits.

It localises to the cytoplasm. The catalysed reaction is Exonucleolytic cleavage in either 5'- to 3'- or 3'- to 5'-direction to yield nucleoside 5'-phosphates.. Bidirectionally degrades single-stranded DNA into large acid-insoluble oligonucleotides, which are then degraded further into small acid-soluble oligonucleotides. This is Exodeoxyribonuclease 7 large subunit from Campylobacter lari (strain RM2100 / D67 / ATCC BAA-1060).